We begin with the raw amino-acid sequence, 362 residues long: Glutamate 5-kinase (362 aa).

Lys-3 lines the ATP pocket. The substrate site is built by Ser-43, Asp-128, and Asn-140. Residues 160–161 (TD) and 202–208 (TGGMRTK) contribute to the ATP site. A PUA domain is found at 267–348 (AGAILIDDGA…REIENVLGYS (82 aa)).

It belongs to the glutamate 5-kinase family.

It localises to the cytoplasm. The catalysed reaction is L-glutamate + ATP = L-glutamyl 5-phosphate + ADP. Its pathway is amino-acid biosynthesis; L-proline biosynthesis; L-glutamate 5-semialdehyde from L-glutamate: step 1/2. Its function is as follows. Catalyzes the transfer of a phosphate group to glutamate to form L-glutamate 5-phosphate. The protein is Glutamate 5-kinase of Xanthomonas euvesicatoria pv. vesicatoria (strain 85-10) (Xanthomonas campestris pv. vesicatoria).